The sequence spans 353 residues: Photosystem II protein D1 (353 aa).

Thr-2 carries the post-translational modification N-acetylthreonine. The residue at position 2 (Thr-2) is a Phosphothreonine. 3 helical membrane passes run 29-46 (YIGWFGVLMIPTLLTATS), 118-133 (HFLLGVACYMGREWEL), and 142-156 (WIAVAYSAPVAAATA). Position 118 (His-118) interacts with chlorophyll a. Tyr-126 lines the pheophytin a pocket. Residues Asp-170 and Glu-189 each coordinate [CaMn4O5] cluster. The helical transmembrane segment at 197 to 218 (FHMLGVAGVFGGSLFSAMHGSL) threads the bilayer. His-198 is a binding site for chlorophyll a. A quinone-binding positions include His-215 and 264 to 265 (SF). A Fe cation-binding site is contributed by His-215. Position 272 (His-272) interacts with Fe cation. A helical transmembrane segment spans residues 274 to 288 (FLAAWPVVGIWFTAL). [CaMn4O5] cluster is bound by residues His-332, Glu-333, Asp-342, and Ala-344. Residues 345–353 (AVEAPSTIG) constitute a propeptide that is removed on maturation.

The protein belongs to the reaction center PufL/M/PsbA/D family. As to quaternary structure, PSII is composed of 1 copy each of membrane proteins PsbA, PsbB, PsbC, PsbD, PsbE, PsbF, PsbH, PsbI, PsbJ, PsbK, PsbL, PsbM, PsbT, PsbX, PsbY, PsbZ, Psb30/Ycf12, at least 3 peripheral proteins of the oxygen-evolving complex and a large number of cofactors. It forms dimeric complexes. It depends on The D1/D2 heterodimer binds P680, chlorophylls that are the primary electron donor of PSII, and subsequent electron acceptors. It shares a non-heme iron and each subunit binds pheophytin, quinone, additional chlorophylls, carotenoids and lipids. D1 provides most of the ligands for the Mn4-Ca-O5 cluster of the oxygen-evolving complex (OEC). There is also a Cl(-1) ion associated with D1 and D2, which is required for oxygen evolution. The PSII complex binds additional chlorophylls, carotenoids and specific lipids. as a cofactor. In terms of processing, tyr-161 forms a radical intermediate that is referred to as redox-active TyrZ, YZ or Y-Z. Post-translationally, C-terminally processed by CTPA; processing is essential to allow assembly of the oxygen-evolving complex and thus photosynthetic growth.

The protein resides in the plastid. The protein localises to the chloroplast thylakoid membrane. The enzyme catalyses 2 a plastoquinone + 4 hnu + 2 H2O = 2 a plastoquinol + O2. In terms of biological role, photosystem II (PSII) is a light-driven water:plastoquinone oxidoreductase that uses light energy to abstract electrons from H(2)O, generating O(2) and a proton gradient subsequently used for ATP formation. It consists of a core antenna complex that captures photons, and an electron transfer chain that converts photonic excitation into a charge separation. The D1/D2 (PsbA/PsbD) reaction center heterodimer binds P680, the primary electron donor of PSII as well as several subsequent electron acceptors. The protein is Photosystem II protein D1 of Lemna minor (Common duckweed).